The primary structure comprises 113 residues: U11-theraphotoxin-Hhn1a (113 aa).

A signal peptide spans 1–21 (MNTVRVTFLLVFVLAVSLGQA). A propeptide spanning residues 22–74 (DKDENRMEMQEKAEQGKSYLDFAENLLLQKLEELEAKLLEEDSEESRNSRQKR) is cleaved from the precursor. Intrachain disulfides connect cysteine 75–cysteine 90, cysteine 82–cysteine 95, and cysteine 89–cysteine 110.

Belongs to the neurotoxin 14 (magi-1) family. 01 (HNTX-16) subfamily. In terms of tissue distribution, expressed by the venom gland.

It localises to the secreted. In terms of biological role, probable ion channel inhibitor. The sequence is that of U11-theraphotoxin-Hhn1a from Cyriopagopus hainanus (Chinese bird spider).